A 213-amino-acid polypeptide reads, in one-letter code: Probable nicotinate-nucleotide adenylyltransferase (213 aa).

The protein belongs to the NadD family.

The enzyme catalyses nicotinate beta-D-ribonucleotide + ATP + H(+) = deamido-NAD(+) + diphosphate. The protein operates within cofactor biosynthesis; NAD(+) biosynthesis; deamido-NAD(+) from nicotinate D-ribonucleotide: step 1/1. Functionally, catalyzes the reversible adenylation of nicotinate mononucleotide (NaMN) to nicotinic acid adenine dinucleotide (NaAD). This Shigella boydii serotype 18 (strain CDC 3083-94 / BS512) protein is Probable nicotinate-nucleotide adenylyltransferase.